Here is a 185-residue protein sequence, read N- to C-terminus: MNLINSTKIFSSLMIASVENNTAIFSLNTDILETNLINLLVIFFLLIYQGRPFFTALLEERRKTVLDKIKKSENSYNEALEKLKEAKSKLAQAELAAKQIYEEAEAVAESIKKTGLAQLEKDIKRIEETTQASINTQQLSVITYLRQQVALLALRRVVSQLKNYLKPELHSQFIDRKILQLRKQK.

A helical membrane pass occupies residues 36 to 58 (LINLLVIFFLLIYQGRPFFTALL).

It belongs to the ATPase B chain family. F-type ATPases have 2 components, F(1) - the catalytic core - and F(0) - the membrane proton channel. F(1) has five subunits: alpha(3), beta(3), gamma(1), delta(1), epsilon(1). F(0) has four main subunits: a(1), b(1), b'(1) and c(10-14). The alpha and beta chains form an alternating ring which encloses part of the gamma chain. F(1) is attached to F(0) by a central stalk formed by the gamma and epsilon chains, while a peripheral stalk is formed by the delta, b and b' chains.

Its subcellular location is the plastid. The protein resides in the cyanelle thylakoid membrane. Its function is as follows. F(1)F(0) ATP synthase produces ATP from ADP in the presence of a proton or sodium gradient. F-type ATPases consist of two structural domains, F(1) containing the extramembraneous catalytic core and F(0) containing the membrane proton channel, linked together by a central stalk and a peripheral stalk. During catalysis, ATP synthesis in the catalytic domain of F(1) is coupled via a rotary mechanism of the central stalk subunits to proton translocation. In terms of biological role, component of the F(0) channel, it forms part of the peripheral stalk, linking F(1) to F(0). In Cyanophora paradoxa, this protein is ATP synthase subunit b, cyanelle.